The chain runs to 168 residues: Cell division inhibitor SulA (168 aa).

Positions 1 to 20 are disordered; sequence MSTQSVSSHNIESSSFSANQ. The ftsZ binding stretch occupies residues 105-111; it reads ALLTGNY. Positions 161–168 are lon protease binding; that stretch reads KIHSTLYH.

The protein belongs to the SulA family. In terms of assembly, interacts with FtsZ. Is rapidly cleaved and degraded by the Lon protease once DNA damage is repaired.

Component of the SOS system and an inhibitor of cell division. Accumulation of SulA causes rapid cessation of cell division and the appearance of long, non-septate filaments. In the presence of GTP, binds a polymerization-competent form of FtsZ in a 1:1 ratio, thus inhibiting FtsZ polymerization and therefore preventing it from participating in the assembly of the Z ring. This mechanism prevents the premature segregation of damaged DNA to daughter cells during cell division. The protein is Cell division inhibitor SulA of Pectobacterium atrosepticum (strain SCRI 1043 / ATCC BAA-672) (Erwinia carotovora subsp. atroseptica).